The primary structure comprises 325 residues: ATP phosphoribosyltransferase (325 aa).

This sequence belongs to the ATP phosphoribosyltransferase family. Long subfamily. Requires Mg(2+) as cofactor.

It localises to the cytoplasm. It carries out the reaction 1-(5-phospho-beta-D-ribosyl)-ATP + diphosphate = 5-phospho-alpha-D-ribose 1-diphosphate + ATP. It functions in the pathway amino-acid biosynthesis; L-histidine biosynthesis; L-histidine from 5-phospho-alpha-D-ribose 1-diphosphate: step 1/9. With respect to regulation, feedback inhibited by histidine. Its function is as follows. Catalyzes the condensation of ATP and 5-phosphoribose 1-diphosphate to form N'-(5'-phosphoribosyl)-ATP (PR-ATP). Has a crucial role in the pathway because the rate of histidine biosynthesis seems to be controlled primarily by regulation of HisG enzymatic activity. This Afipia carboxidovorans (strain ATCC 49405 / DSM 1227 / KCTC 32145 / OM5) (Oligotropha carboxidovorans) protein is ATP phosphoribosyltransferase.